The following is a 758-amino-acid chain: 5-methyltetrahydropteroyltriglutamate--homocysteine methyltransferase (758 aa).

5-methyltetrahydropteroyltri-L-glutamate contacts are provided by residues 16 to 19 and lysine 116; that span reads RELK. Residues 436-438 and glutamate 489 contribute to the L-homocysteine site; that span reads IGS. L-methionine contacts are provided by residues 436–438 and glutamate 489; that span reads IGS. Residues 520–521 and tryptophan 566 contribute to the 5-methyltetrahydropteroyltri-L-glutamate site; that span reads RC. Aspartate 604 is a binding site for L-homocysteine. Residue aspartate 604 coordinates L-methionine. Glutamate 610 serves as a coordination point for 5-methyltetrahydropteroyltri-L-glutamate. The Zn(2+) site is built by histidine 646, cysteine 648, and glutamate 670. Catalysis depends on histidine 699, which acts as the Proton donor. Residue cysteine 731 participates in Zn(2+) binding.

Belongs to the vitamin-B12 independent methionine synthase family. It depends on Zn(2+) as a cofactor.

The catalysed reaction is 5-methyltetrahydropteroyltri-L-glutamate + L-homocysteine = tetrahydropteroyltri-L-glutamate + L-methionine. It functions in the pathway amino-acid biosynthesis; L-methionine biosynthesis via de novo pathway; L-methionine from L-homocysteine (MetE route): step 1/1. Its function is as follows. Catalyzes the transfer of a methyl group from 5-methyltetrahydrofolate to homocysteine resulting in methionine formation. The sequence is that of 5-methyltetrahydropteroyltriglutamate--homocysteine methyltransferase from Xylella fastidiosa (strain 9a5c).